The chain runs to 515 residues: ATP synthase subunit alpha (515 aa).

171 to 178 (GDRQTGKT) is an ATP binding site.

It belongs to the ATPase alpha/beta chains family. As to quaternary structure, F-type ATPases have 2 components, CF(1) - the catalytic core - and CF(0) - the membrane proton channel. CF(1) has five subunits: alpha(3), beta(3), gamma(1), delta(1), epsilon(1). CF(0) has three main subunits: a(1), b(2) and c(9-12). The alpha and beta chains form an alternating ring which encloses part of the gamma chain. CF(1) is attached to CF(0) by a central stalk formed by the gamma and epsilon chains, while a peripheral stalk is formed by the delta and b chains.

Its subcellular location is the cell inner membrane. It carries out the reaction ATP + H2O + 4 H(+)(in) = ADP + phosphate + 5 H(+)(out). Its function is as follows. Produces ATP from ADP in the presence of a proton gradient across the membrane. The alpha chain is a regulatory subunit. The sequence is that of ATP synthase subunit alpha from Stenotrophomonas maltophilia (strain R551-3).